Consider the following 260-residue polypeptide: Serine/threonine-protein acetyltransferase NGR_a02610 (260 aa).

Residues His-123 and Glu-143 contribute to the active site. CoA is bound at residue His-123. 180 to 181 is a CoA binding site; that stretch reads KS. Cys-185 is an active-site residue.

The protein belongs to the acetyltransferase YopJ family.

It carries out the reaction L-threonyl-[protein] + acetyl-CoA = O-acetyl-L-threonyl-[protein] + CoA. The enzyme catalyses L-seryl-[protein] + acetyl-CoA = O-acetyl-L-seryl-[protein] + CoA. Its function is as follows. Serine/threonine-protein acetyltransferase translocated into infected cells, which mediates acetylation of serine and threonine residues of host target proteins. In Sinorhizobium fredii (strain NBRC 101917 / NGR234), this protein is Serine/threonine-protein acetyltransferase NGR_a02610.